The primary structure comprises 438 residues: MEMVEPDAHLVALKVMRLMRPTLVGLGPVVTCEPTDLVQRFSSSQESDGMSGACAETLAAGQVLLLPQSFGSIYLGETFASYICVHNTTPNPVECVTVKADLQSNTSRINLSMHENAKSPVVLPPGGTIDDVIRYEVKEIGTHILVCEVNYSTPAGYAQSLRKFFKFQVLKPLDVKTKFYNAEIDEIYLEAQIQNVTTSPFCLEKVELDGSEDYSVTPLNTLPNGESVFTVKHMLQPNNSCQFLYCIKPKGDIAKNVDTLRQFNNVGKLDIVWRSNLGEKGRLQTSQLQRLPFECKTLRLEVLDAKNTIKIGTIFTFNCRVTNTSEHPMKLNVRLAAKFSPDSQYTGCADFMLNLLQSGESAEFPLSVCPSKLGLVKITPLVLTNTLQNEQFTIENVVDVFVVNSDYDNDTTTHQNKLIRYESAASCLTQKQVQLQVV.

This sequence belongs to the TRAPPC13 family.

The sequence is that of Probable trafficking protein particle complex subunit 13 homolog from Drosophila melanogaster (Fruit fly).